A 254-amino-acid chain; its full sequence is Isoprenyl transferase (254 aa).

D12 is a catalytic residue. Residue D12 coordinates Mg(2+). Residues 13 to 16 (GNGR), W17, R25, H29, and 57 to 59 (SSE) each bind substrate. The active-site Proton acceptor is the N60. Residues W61, R63, R180, and 186–188 (RLS) contribute to the substrate site. Position 199 (E199) interacts with Mg(2+).

The protein belongs to the UPP synthase family. As to quaternary structure, homodimer. Mg(2+) is required as a cofactor.

In terms of biological role, catalyzes the condensation of isopentenyl diphosphate (IPP) with allylic pyrophosphates generating different type of terpenoids. The sequence is that of Isoprenyl transferase from Brucella abortus biovar 1 (strain 9-941).